A 335-amino-acid chain; its full sequence is Biotin synthase (335 aa).

The Radical SAM core domain occupies 46–274; that stretch reads YNIQLASLFS…KSKIRLSAGR (229 aa). Residues Cys61, Cys65, and Cys68 each coordinate [4Fe-4S] cluster. The [2Fe-2S] cluster site is built by Cys105, Cys137, Cys197, and Arg269.

This sequence belongs to the radical SAM superfamily. Biotin synthase family. In terms of assembly, homodimer. It depends on [4Fe-4S] cluster as a cofactor. [2Fe-2S] cluster serves as cofactor.

It carries out the reaction (4R,5S)-dethiobiotin + (sulfur carrier)-SH + 2 reduced [2Fe-2S]-[ferredoxin] + 2 S-adenosyl-L-methionine = (sulfur carrier)-H + biotin + 2 5'-deoxyadenosine + 2 L-methionine + 2 oxidized [2Fe-2S]-[ferredoxin]. It functions in the pathway cofactor biosynthesis; biotin biosynthesis; biotin from 7,8-diaminononanoate: step 2/2. Its function is as follows. Catalyzes the conversion of dethiobiotin (DTB) to biotin by the insertion of a sulfur atom into dethiobiotin via a radical-based mechanism. In Prochlorococcus marinus (strain AS9601), this protein is Biotin synthase.